The primary structure comprises 444 residues: tRNA modification GTPase MnmE (444 aa).

(6S)-5-formyl-5,6,7,8-tetrahydrofolate contacts are provided by Arg28, Glu86, and Arg126. Positions 224–368 (GFCVVLAGAP…LLDAIQGSAA (145 aa)) constitute a TrmE-type G domain. A K(+)-binding site is contributed by Asn234. GTP is bound by residues 234-239 (NAGKST), 253-259 (SDIPGTT), and 278-281 (DTAG). Ser238 lines the Mg(2+) pocket. K(+) is bound by residues Ser253, Ile255, and Thr258. Residue Thr259 participates in Mg(2+) binding. Lys444 lines the (6S)-5-formyl-5,6,7,8-tetrahydrofolate pocket.

The protein belongs to the TRAFAC class TrmE-Era-EngA-EngB-Septin-like GTPase superfamily. TrmE GTPase family. Homodimer. Heterotetramer of two MnmE and two MnmG subunits. Requires K(+) as cofactor.

It localises to the cytoplasm. Exhibits a very high intrinsic GTPase hydrolysis rate. Involved in the addition of a carboxymethylaminomethyl (cmnm) group at the wobble position (U34) of certain tRNAs, forming tRNA-cmnm(5)s(2)U34. The sequence is that of tRNA modification GTPase MnmE from Methylorubrum populi (strain ATCC BAA-705 / NCIMB 13946 / BJ001) (Methylobacterium populi).